Here is a 152-residue protein sequence, read N- to C-terminus: Transcriptional repressor NrdR (152 aa).

Residues 3–34 (CPFCNAADSKVIDSRLAAEGCQIRRRRECVSC) fold into a zinc finger. The 91-residue stretch at 49–139 (PRVIKSNGKN…VYQDFQDVEA (91 aa)) folds into the ATP-cone domain.

This sequence belongs to the NrdR family. Requires Zn(2+) as cofactor.

Negatively regulates transcription of bacterial ribonucleotide reductase nrd genes and operons by binding to NrdR-boxes. The sequence is that of Transcriptional repressor NrdR from Acinetobacter baumannii (strain AB0057).